We begin with the raw amino-acid sequence, 245 residues long: Orotidine 5'-phosphate decarboxylase (245 aa).

Residues D22, K44, D71 to T80, T131, R192, Q201, G221, and R222 contribute to the substrate site. K73 (proton donor) is an active-site residue.

Belongs to the OMP decarboxylase family. Type 1 subfamily. Homodimer.

It catalyses the reaction orotidine 5'-phosphate + H(+) = UMP + CO2. The protein operates within pyrimidine metabolism; UMP biosynthesis via de novo pathway; UMP from orotate: step 2/2. Catalyzes the decarboxylation of orotidine 5'-monophosphate (OMP) to uridine 5'-monophosphate (UMP). The polypeptide is Orotidine 5'-phosphate decarboxylase (Escherichia coli O81 (strain ED1a)).